The primary structure comprises 343 residues: N-acetyl-gamma-glutamyl-phosphate reductase (343 aa).

Residue Cys-152 is part of the active site.

It belongs to the NAGSA dehydrogenase family. Type 1 subfamily.

It is found in the cytoplasm. It carries out the reaction N-acetyl-L-glutamate 5-semialdehyde + phosphate + NADP(+) = N-acetyl-L-glutamyl 5-phosphate + NADPH + H(+). Its pathway is amino-acid biosynthesis; L-arginine biosynthesis; N(2)-acetyl-L-ornithine from L-glutamate: step 3/4. In terms of biological role, catalyzes the NADPH-dependent reduction of N-acetyl-5-glutamyl phosphate to yield N-acetyl-L-glutamate 5-semialdehyde. This is N-acetyl-gamma-glutamyl-phosphate reductase from Methanopyrus kandleri (strain AV19 / DSM 6324 / JCM 9639 / NBRC 100938).